The sequence spans 271 residues: Dihydropteroate synthase type-2 (271 aa).

The region spanning 1–259 (MNKSLIIFGI…EPRPLRDGLA (259 aa)) is the Pterin-binding domain. Residue asparagine 12 coordinates 4-aminobenzoate. Residues asparagine 12, phenylalanine 18, serine 51, and serine 52 each coordinate diphosphate. Residue asparagine 12 participates in Mg(2+) binding. 7,8-dihydropteroate is bound by residues serine 52, aspartate 85, asparagine 104, aspartate 174, phenylalanine 179, lysine 213, and serine 214. Aspartate 85, asparagine 104, and aspartate 174 together coordinate (7,8-dihydropterin-6-yl)methyl diphosphate. Asparagine 104 and aspartate 174 together coordinate 6-hydroxymethyl-7,8-dihydropterin. Lysine 213 is a (7,8-dihydropterin-6-yl)methyl diphosphate binding site. Lysine 213 lines the 6-hydroxymethyl-7,8-dihydropterin pocket. Arginine 247 serves as a coordination point for 4-aminobenzoate. 2 residues coordinate diphosphate: arginine 247 and histidine 249. (7,8-dihydropterin-6-yl)methyl diphosphate is bound at residue 247 to 249 (RTH).

Belongs to the DHPS family. In terms of assembly, homodimer. The cofactor is Mg(2+).

It carries out the reaction (7,8-dihydropterin-6-yl)methyl diphosphate + 4-aminobenzoate = 7,8-dihydropteroate + diphosphate. Its pathway is cofactor biosynthesis; tetrahydrofolate biosynthesis; 7,8-dihydrofolate from 2-amino-4-hydroxy-6-hydroxymethyl-7,8-dihydropteridine diphosphate and 4-aminobenzoate: step 1/2. Catalyzes the condensation of para-aminobenzoate (pABA) with 6-hydroxymethyl-7,8-dihydropterin diphosphate (DHPt-PP) to form 7,8-dihydropteroate (H2Pte), the immediate precursor of folate derivatives. Confers resistance to sulfonamide antibiotics, including sulfamethoxazole (SMX), sulfadiazine and sulfisoxazole. The type II enzyme is stable whereas type I DHPS loses its activity rapidly. This chain is Dihydropteroate synthase type-2, found in Escherichia coli.